The following is an 861-amino-acid chain: Probable linoleate 9S-lipoxygenase 7 (861 aa).

The PLAT domain maps to Asn-29–Ala-160. Residues Pro-163–Ile-861 form the Lipoxygenase domain. A disordered region spans residues Thr-220 to Ser-246. 5 residues coordinate Fe cation: His-522, His-527, His-713, Asn-717, and Ile-861.

The protein belongs to the lipoxygenase family. In terms of assembly, monomer. Fe cation is required as a cofactor. Expressed in tubers. Detected in sprouts and flowers. but not in leaves or stems.

It localises to the cytoplasm. It catalyses the reaction (9Z,12Z)-octadecadienoate + O2 = (9S)-hydroperoxy-(10E,12Z)-octadecadienoate. It functions in the pathway lipid metabolism; oxylipin biosynthesis. Plant lipoxygenases may be involved in a number of diverse aspects of plant physiology including growth and development, pest resistance, and senescence or responses to wounding. Catalyzes the hydroperoxidation of lipids containing a cis,cis-1,4-pentadiene structure. This is Probable linoleate 9S-lipoxygenase 7 (LOX1.7) from Solanum tuberosum (Potato).